The chain runs to 428 residues: Cyclic AMP-responsive element-binding protein 3-like protein 3-B (428 aa).

The Cytoplasmic portion of the chain corresponds to Met1–Gln286. Residues Val67–Ser83 show a composition bias toward low complexity. Positions Val67 to Pro104 are disordered. A compositionally biased stretch (pro residues) spans Ser93–Glu103. A bZIP domain is found at Ile210–Leu273. Positions Lys212–Arg241 are basic motif. The tract at residues Leu252–Leu273 is leucine-zipper. A helical; Signal-anchor for type II membrane protein membrane pass occupies residues Ala287–Leu303. At Pro304–Met428 the chain is on the lumenal side. The segment at Thr381–Met428 is disordered. Residues Pro385 to Asp402 show a composition bias toward basic and acidic residues. Asn389 carries an N-linked (GlcNAc...) asparagine glycan.

The protein belongs to the bZIP family. ATF subfamily. Binds DNA as a dimer. In terms of processing, controlled by regulated intramembrane proteolysis (RIP). A fragment containing the cytoplasmic transcription factor domain is released by proteolysis. The cleavage seems to be performed sequentially by site-1 and site-2 proteases.

It is found in the endoplasmic reticulum membrane. It localises to the nucleus. Transcriptional activator. Binds the cAMP response element (CRE). Activates transcription through box-B element and CRE. Seems to function synergistically with atf6. Regulates FGF21 transcription. The protein is Cyclic AMP-responsive element-binding protein 3-like protein 3-B (creb3l3b) of Danio rerio (Zebrafish).